A 440-amino-acid polypeptide reads, in one-letter code: Cell division protein FtsA (440 aa).

Positions 396 to 440 (VSSSEEQEQHHHQNEVQQRPKGKQKTQAEHNKQSKMKKLLSMFWE) are disordered.

It belongs to the FtsA/MreB family. As to quaternary structure, homodimer. Interacts with FtsZ.

It is found in the cell membrane. Functionally, cell division protein that is required for the assembly of the Z ring. May serve as a membrane anchor for the Z ring. Binds and hydrolyzes ATP. Also involved in sporulation. This is Cell division protein FtsA from Bacillus subtilis (strain 168).